Consider the following 100-residue polypeptide: Bombyxin A-2 homolog (100 aa).

The N-terminal stretch at 1-18 is a signal peptide; the sequence is MRTQVLFLIVVLAVMASG. 3 disulfide bridges follow: Cys26–Cys85, Cys38–Cys98, and Cys84–Cys89. A propeptide spans 47–75 (c peptide like); it reads PPYISSENEGYGWKWLERQRARQLDEARG.

Belongs to the insulin family. As to quaternary structure, heterodimer of a B chain and an A chain linked by two disulfide bonds.

The protein localises to the secreted. In terms of biological role, brain peptide responsible for activation of prothoracic glands to produce ecdysone in insects. The sequence is that of Bombyxin A-2 homolog (SBXA2) from Samia cynthia (Ailanthus silkmoth).